The chain runs to 319 residues: Protein-methionine-sulfoxide reductase catalytic subunit MsrP (319 aa).

Positions Met-1 to Ala-40 form a signal peptide, tat-type signal. Residues Asn-73, Tyr-76–Glu-77, Cys-131, Thr-166, Asn-218, Arg-223, and Asn-234–Lys-236 each bind Mo-molybdopterin.

It belongs to the MsrP family. Heterodimer of a catalytic subunit (MsrP) and a heme-binding subunit (MsrQ). Requires Mo-molybdopterin as cofactor. Post-translationally, predicted to be exported by the Tat system. The position of the signal peptide cleavage has not been experimentally proven.

It localises to the periplasm. The catalysed reaction is L-methionyl-[protein] + a quinone + H2O = L-methionyl-(S)-S-oxide-[protein] + a quinol. The enzyme catalyses L-methionyl-[protein] + a quinone + H2O = L-methionyl-(R)-S-oxide-[protein] + a quinol. Part of the MsrPQ system that repairs oxidized periplasmic proteins containing methionine sulfoxide residues (Met-O), using respiratory chain electrons. Thus protects these proteins from oxidative-stress damage caused by reactive species of oxygen and chlorine generated by the host defense mechanisms. MsrPQ is essential for the maintenance of envelope integrity under bleach stress, rescuing a wide series of structurally unrelated periplasmic proteins from methionine oxidation. The catalytic subunit MsrP is non-stereospecific, being able to reduce both (R-) and (S-) diastereoisomers of methionine sulfoxide. This is Protein-methionine-sulfoxide reductase catalytic subunit MsrP from Pasteurella multocida (strain Pm70).